The primary structure comprises 339 residues: MDRRSRAMADSVLSLNKLDVGFPGMTVVRDLNLDVADGAFVSLLGPSGSGKSSVLRTIAGLLPALGGRVLLEGQDITALPPERRNVGIVFQNYALFPTMSAFENIAFALRVAKKSKAEVERRVGEVAEMAGISDQLDKKPANMSGGQQQRVAIARALVTGSRVLLFDEPLSNLDAKVRAAMRKEIKRLQSELGFTAIFVTHDQEDALTMSDLIVVLNHGKIEQIGDGRTLYRKPATPFICEFIGVSNELAPPLAARLLGYDVKGRSFLRHEDVLLGAVAGVPARVNHVEFLGAHSRVDLEVEGHALSAMLIGDQLPEPGSTVSLGIRPGAAHVFQEVTG.

In terms of domain architecture, ABC transporter spans Leu13–Ile243. Gly45–Ser52 lines the ATP pocket.

It belongs to the ABC transporter superfamily.

The protein resides in the cell inner membrane. Its function is as follows. Probably part of a binding-protein-dependent transport system y4fNOP. Probably responsible for energy coupling to the transport system. This is an uncharacterized protein from Sinorhizobium fredii (strain NBRC 101917 / NGR234).